Reading from the N-terminus, the 396-residue chain is Probable sugar efflux transporter (396 aa).

The next 12 helical transmembrane spans lie at 15–35, 50–70, 81–101, 103–123, 136–156, 169–189, 209–229, 246–266, 275–295, 301–321, 333–353, and 364–384; these read VVTL…PVGL, VGIM…PFML, LICL…AWNF, VLVI…SITA, AQAL…GLPI, TFFA…KLLP, PALM…YTAY, FATV…LVFG, SLVS…LPAA, LAIL…GMQV, VAMA…ALVG, and AIGY…VLIF.

This sequence belongs to the major facilitator superfamily. SotB (TC 2.A.1.2) family.

The protein resides in the cell inner membrane. Its function is as follows. Involved in the efflux of sugars. The physiological role may be the reduction of the intracellular concentration of toxic sugars or sugar metabolites. The protein is Probable sugar efflux transporter of Salmonella agona (strain SL483).